We begin with the raw amino-acid sequence, 104 residues long: Pyrimidine/purine nucleoside phosphorylase (104 aa).

It belongs to the nucleoside phosphorylase PpnP family.

It carries out the reaction a purine D-ribonucleoside + phosphate = a purine nucleobase + alpha-D-ribose 1-phosphate. The catalysed reaction is adenosine + phosphate = alpha-D-ribose 1-phosphate + adenine. The enzyme catalyses cytidine + phosphate = cytosine + alpha-D-ribose 1-phosphate. It catalyses the reaction guanosine + phosphate = alpha-D-ribose 1-phosphate + guanine. It carries out the reaction inosine + phosphate = alpha-D-ribose 1-phosphate + hypoxanthine. The catalysed reaction is thymidine + phosphate = 2-deoxy-alpha-D-ribose 1-phosphate + thymine. The enzyme catalyses uridine + phosphate = alpha-D-ribose 1-phosphate + uracil. It catalyses the reaction xanthosine + phosphate = alpha-D-ribose 1-phosphate + xanthine. Its function is as follows. Catalyzes the phosphorolysis of diverse nucleosides, yielding D-ribose 1-phosphate and the respective free bases. Can use uridine, adenosine, guanosine, cytidine, thymidine, inosine and xanthosine as substrates. Also catalyzes the reverse reactions. This chain is Pyrimidine/purine nucleoside phosphorylase, found in Thiobacillus denitrificans (strain ATCC 25259 / T1).